A 206-amino-acid polypeptide reads, in one-letter code: Ectodysplasin-A receptor-associated adapter protein (206 aa).

Disordered regions lie at residues 1-36 and 52-77; these read MRPLQSYKAFEDHMAQEPVEDTDPSTLSFNTSDKYP and TLNCPPNSDMKNQGEENGFPDSTGDP. Polar residues-rich tracts occupy residues 24–33 and 52–62; these read PSTLSFNTSD and TLNCPPNSDMK. Residues 114 to 190 form the Death domain; it reads DVIRIKLDPC…DVEKVLRRWV (77 aa).

As to quaternary structure, self-associates and binds to EDAR, TRAF1, TRAF2 and TRAF3.

The protein localises to the cytoplasm. Its function is as follows. Adapter protein that interacts with EDAR DEATH domain and couples the receptor to EDA signaling pathway during morphogenesis of ectodermal organs. Mediates the activation of NF-kappa-B. This is Ectodysplasin-A receptor-associated adapter protein (EDARADD) from Macaca fascicularis (Crab-eating macaque).